Here is a 282-residue protein sequence, read N- to C-terminus: Formamidopyrimidine-DNA glycosylase (282 aa).

The active-site Schiff-base intermediate with DNA is proline 2. Glutamate 3 acts as the Proton donor in catalysis. Lysine 59 serves as the catalytic Proton donor; for beta-elimination activity. DNA-binding residues include histidine 97 and arginine 116. The FPG-type zinc finger occupies 246–280 (WVYGRKDQPCRTCGTPIQKLKLAGRSSHFCPRCQP). The active-site Proton donor; for delta-elimination activity is arginine 270.

This sequence belongs to the FPG family. As to quaternary structure, monomer. Requires Zn(2+) as cofactor.

It carries out the reaction Hydrolysis of DNA containing ring-opened 7-methylguanine residues, releasing 2,6-diamino-4-hydroxy-5-(N-methyl)formamidopyrimidine.. The enzyme catalyses 2'-deoxyribonucleotide-(2'-deoxyribose 5'-phosphate)-2'-deoxyribonucleotide-DNA = a 3'-end 2'-deoxyribonucleotide-(2,3-dehydro-2,3-deoxyribose 5'-phosphate)-DNA + a 5'-end 5'-phospho-2'-deoxyribonucleoside-DNA + H(+). Functionally, involved in base excision repair of DNA damaged by oxidation or by mutagenic agents. Acts as a DNA glycosylase that recognizes and removes damaged bases. Has a preference for oxidized purines, such as 7,8-dihydro-8-oxoguanine (8-oxoG). Has AP (apurinic/apyrimidinic) lyase activity and introduces nicks in the DNA strand. Cleaves the DNA backbone by beta-delta elimination to generate a single-strand break at the site of the removed base with both 3'- and 5'-phosphates. In Synechococcus sp. (strain ATCC 27144 / PCC 6301 / SAUG 1402/1) (Anacystis nidulans), this protein is Formamidopyrimidine-DNA glycosylase (mutM).